The sequence spans 472 residues: Threonine synthase-like 2 (472 aa).

N6-(pyridoxal phosphate)lysine is present on Lys113.

The protein belongs to the threonine synthase family. Pyridoxal 5'-phosphate serves as cofactor.

Acts as a catabolic phospho-lyase on both gamma- and beta-phosphorylated substrates. Degrades O-phospho-threonine (PThr) to alpha-ketobutyrate, ammonia and phosphate. This chain is Threonine synthase-like 2 (thnsl2), found in Xenopus laevis (African clawed frog).